The primary structure comprises 350 residues: C4-dicarboxylate-binding protein DctB (350 aa).

Positions 1 to 18 (MKSLLACLALMIAGIATA) are cleaved as a signal peptide.

Belongs to the bacterial solute-binding protein 7 family.

The protein resides in the secreted. Its function is as follows. Part of the binding-protein-dependent transport system for uptake of C4-dicarboxylates. Responsible for growth on fumarate and succinate but not malate. Is not directly involved in C4-dicarboxylate uptake, but plays a sensory role in the DctS/DctR two-component system which regulates the expression of the dctA C4-dicarboxylate transporter. The chain is C4-dicarboxylate-binding protein DctB (dctB) from Bacillus subtilis (strain 168).